We begin with the raw amino-acid sequence, 316 residues long: Pantothenate kinase (316 aa).

ATP is bound at residue 95–102 (GSVSVGKS).

Belongs to the prokaryotic pantothenate kinase family.

Its subcellular location is the cytoplasm. The enzyme catalyses (R)-pantothenate + ATP = (R)-4'-phosphopantothenate + ADP + H(+). Its pathway is cofactor biosynthesis; coenzyme A biosynthesis; CoA from (R)-pantothenate: step 1/5. This Actinobacillus pleuropneumoniae serotype 7 (strain AP76) protein is Pantothenate kinase.